We begin with the raw amino-acid sequence, 454 residues long: Response regulator PleD (454 aa).

Response regulatory domains follow at residues arginine 4 to threonine 120 and arginine 155 to isoleucine 269. Mg(2+)-binding residues include aspartate 9, aspartate 10, aspartate 53, and methionine 55. Aspartate 53 is subject to 4-aspartylphosphate. A GGDEF domain is found at aspartate 319–alanine 454. Substrate is bound by residues asparagine 335 and aspartate 344. Glutamate 370 functions as the Proton acceptor in the catalytic mechanism.

In terms of assembly, homodimer. Inactive monomer in solution. Post-translationally, phosphorylated by PleC and DivJ. Phosphorylation stimulates cyclase activity.

The protein localises to the cytoplasm. The enzyme catalyses 2 GTP = 3',3'-c-di-GMP + 2 diphosphate. Its pathway is purine metabolism; 3',5'-cyclic di-GMP biosynthesis. With respect to regulation, allosterically inhibited by the product c-di-GMP. Functionally, response regulator that is part of a signal transduction pathway controlling cell differentiation in the swarmer-to-stalked cell transition. Catalyzes the condensation of two GTP molecules to the cyclic dinucleotide di-GMP (c-di-GMP), which acts as a secondary messenger. The sequence is that of Response regulator PleD (pleD) from Caulobacter vibrioides (strain ATCC 19089 / CIP 103742 / CB 15) (Caulobacter crescentus).